A 161-amino-acid chain; its full sequence is Assembly protein P7 (161 aa).

In terms of assembly, homodimer. Part of the packaging complex composed of RDRP, P4 and P7. Interacts with RDRP.

It is found in the virion. Functionally, assembly protein part of the packaging complex that packages the viral RNA segments, replicate them into a double-stranded form and transcribe them. Required for efficient procapsid assembly. Necessary for stable packaging. May stabilize the RNA-dependent RNA polymerase (RdRP) in its position at the three-fold axis on the inner side of empty-unexpanded procapsids. Could play a role in viral RNA recognition. Seems to be involved in the regulation of plus strand synthesis (transcription) as a fidelity factor. The polypeptide is Assembly protein P7 (P7) (Pseudomonas phage phi6 (Bacteriophage phi-6)).